A 315-amino-acid polypeptide reads, in one-letter code: Initiation factor TFIIB homolog (315 aa).

This sequence belongs to the asfivirus C315R family.

Its function is as follows. Putative initation factor. The protein is Initiation factor TFIIB homolog of Ornithodoros (relapsing fever ticks).